The sequence spans 346 residues: Sulfate/thiosulfate import ATP-binding protein CysA (346 aa).

Residues Val-3–Ile-237 form the ABC transporter domain. Gly-35 to Thr-42 is an ATP binding site.

Belongs to the ABC transporter superfamily. Sulfate/tungstate importer (TC 3.A.1.6) family. In terms of assembly, the complex is composed of two ATP-binding proteins (CysA), two transmembrane proteins (CysT and CysW) and a solute-binding protein (CysP).

It localises to the cell inner membrane. It carries out the reaction sulfate(out) + ATP + H2O = sulfate(in) + ADP + phosphate + H(+). The catalysed reaction is thiosulfate(out) + ATP + H2O = thiosulfate(in) + ADP + phosphate + H(+). Functionally, part of the ABC transporter complex CysAWTP involved in sulfate/thiosulfate import. Responsible for energy coupling to the transport system. The protein is Sulfate/thiosulfate import ATP-binding protein CysA of Mesorhizobium japonicum (strain LMG 29417 / CECT 9101 / MAFF 303099) (Mesorhizobium loti (strain MAFF 303099)).